The chain runs to 167 residues: 6,7-dimethyl-8-ribityllumazine synthase (167 aa).

Residues F26, 60–62, and 89–91 contribute to the 5-amino-6-(D-ribitylamino)uracil site; these read AFE and AVI. Residue 94–95 participates in (2S)-2-hydroxy-3-oxobutyl phosphate binding; that stretch reads ET. The active-site Proton donor is the H97. F122 contacts 5-amino-6-(D-ribitylamino)uracil. R136 is a binding site for (2S)-2-hydroxy-3-oxobutyl phosphate.

It belongs to the DMRL synthase family. In terms of assembly, forms an icosahedral capsid composed of 60 subunits, arranged as a dodecamer of pentamers.

It carries out the reaction (2S)-2-hydroxy-3-oxobutyl phosphate + 5-amino-6-(D-ribitylamino)uracil = 6,7-dimethyl-8-(1-D-ribityl)lumazine + phosphate + 2 H2O + H(+). Its pathway is cofactor biosynthesis; riboflavin biosynthesis; riboflavin from 2-hydroxy-3-oxobutyl phosphate and 5-amino-6-(D-ribitylamino)uracil: step 1/2. Its function is as follows. Catalyzes the formation of 6,7-dimethyl-8-ribityllumazine by condensation of 5-amino-6-(D-ribitylamino)uracil with 3,4-dihydroxy-2-butanone 4-phosphate. This is the penultimate step in the biosynthesis of riboflavin. This is 6,7-dimethyl-8-ribityllumazine synthase from Vesicomyosocius okutanii subsp. Calyptogena okutanii (strain HA).